Reading from the N-terminus, the 517-residue chain is GMP synthase [glutamine-hydrolyzing] (517 aa).

The 192-residue stretch at 11-202 (KIIVLDYGSQ…AFDVCHAEAN (192 aa)) folds into the Glutamine amidotransferase type-1 domain. C88 serves as the catalytic Nucleophile. Active-site residues include H176 and E178. The region spanning 203 to 392 (WSMDDFITKQ…LGMPHSLVWR (190 aa)) is the GMPS ATP-PPase domain. Residue 230-236 (SGGVDSS) participates in ATP binding.

Homodimer.

The enzyme catalyses XMP + L-glutamine + ATP + H2O = GMP + L-glutamate + AMP + diphosphate + 2 H(+). The protein operates within purine metabolism; GMP biosynthesis; GMP from XMP (L-Gln route): step 1/1. In terms of biological role, catalyzes the synthesis of GMP from XMP. The protein is GMP synthase [glutamine-hydrolyzing] (guaA) of Lacticaseibacillus rhamnosus (Lactobacillus rhamnosus).